A 1367-amino-acid chain; its full sequence is MAP3K epsilon protein kinase 2 (1367 aa).

The region spanning 20–274 (YMLGDEIGKG…AKTLLSHPWI (255 aa)) is the Protein kinase domain. HEAT repeat units follow at residues 25 to 62 (EIGK…EDLN) and 86 to 125 (LKTK…TVYI). Residues 26-34 (IGKGAYGRV) and Lys-49 each bind ATP. Asp-144 serves as the catalytic Proton acceptor. Residues 218–256 (PYYDLQPMPALYRIVQDDTPPIPDSLSPDITDFLRLCFK) form an HEAT 3 repeat. Disordered regions lie at residues 285–422 (LRHS…GRRN) and 437–513 (SSHS…VADG). Residues 293 to 306 (YMKETDSSSEKDAE) are compositionally biased toward basic and acidic residues. Residues 351 to 363 (LGEEGTDSEDDIN) show a composition bias toward acidic residues. Polar residues predominate over residues 378 to 396 (RQSGTCSISSDAKGTSQDV). Composition is skewed to basic and acidic residues over residues 397-408 (LENHEKYDRDEI) and 475-491 (SLHD…EGKT). Residues 492–507 (NEASTSTPTANVNQGD) are compositionally biased toward polar residues. HEAT repeat units lie at residues 538–576 (SQDG…LFPL), 577–614 (QAVE…RPGQ), 633–658 (IPKS…DFLE), 659–700 (NACL…SSPL), and 704–742 (MFIS…VFKL). Residues 792–860 (PRARSGQLDP…LHPDGDRPRL (69 aa)) form a disordered region. Polar residues-rich tracts occupy residues 799-814 (LDPN…TSPS) and 835-845 (ALTSNSQSSDV). Over residues 846-859 (HQPDALHPDGDRPR) the composition is skewed to basic and acidic residues. HEAT repeat units lie at residues 850–888 (ALHP…STDK), 906–943 (DQVR…HESR), 1045–1066 (DYLE…TVKS), 1067–1105 (YMCS…DPNC), 1112–1150 (ADAI…INKR), 1154–1191 (QAAE…ASRN), 1196–1236 (LRAH…KVEQ), 1257–1280 (RHFV…NKTL), 1281–1317 (ALNG…KHPK), and 1347–1367 (QVLV…NTIL).

The protein belongs to the protein kinase superfamily. Ser/Thr protein kinase family. In terms of processing, autophosphorylated. As to expression, expressed in both the sporophytic and the gametophytic tissues, especially in dividing cells. Mostly present in flower buds and mature flowers. Also accumulates in embryos and in roots.

The protein resides in the cytoplasm. It localises to the cytoskeleton. Its subcellular location is the microtubule organizing center. It is found in the nucleus. The protein localises to the nucleolus. The protein resides in the cell membrane. The catalysed reaction is L-seryl-[protein] + ATP = O-phospho-L-seryl-[protein] + ADP + H(+). The enzyme catalyses L-threonyl-[protein] + ATP = O-phospho-L-threonyl-[protein] + ADP + H(+). Functionally, serine/threonine-protein kinase involved in the spatial and temporal control system organizing cortical activities in mitotic and postmitotic cells. Required for the normal functioning of the plasma membrane in developing pollen. Involved in the regulation of cell expansion and embryo development. This chain is MAP3K epsilon protein kinase 2, found in Arabidopsis thaliana (Mouse-ear cress).